A 363-amino-acid chain; its full sequence is 3-dehydroquinate synthase (363 aa).

Residues 75–80 (DAEEGK), 109–113 (GAVTD), 133–134 (TS), K146, K155, and 173–176 (TLDT) each bind NAD(+). Residues E188, H251, and H267 each contribute to the Zn(2+) site.

It belongs to the sugar phosphate cyclases superfamily. Dehydroquinate synthase family. Co(2+) is required as a cofactor. The cofactor is Zn(2+). It depends on NAD(+) as a cofactor.

It is found in the cytoplasm. It carries out the reaction 7-phospho-2-dehydro-3-deoxy-D-arabino-heptonate = 3-dehydroquinate + phosphate. Its pathway is metabolic intermediate biosynthesis; chorismate biosynthesis; chorismate from D-erythrose 4-phosphate and phosphoenolpyruvate: step 2/7. Its function is as follows. Catalyzes the conversion of 3-deoxy-D-arabino-heptulosonate 7-phosphate (DAHP) to dehydroquinate (DHQ). The polypeptide is 3-dehydroquinate synthase (Pseudarthrobacter chlorophenolicus (strain ATCC 700700 / DSM 12829 / CIP 107037 / JCM 12360 / KCTC 9906 / NCIMB 13794 / A6) (Arthrobacter chlorophenolicus)).